The sequence spans 156 residues: Aspartate carbamoyltransferase regulatory chain (156 aa).

4 residues coordinate Zn(2+): cysteine 107, cysteine 112, cysteine 137, and cysteine 140.

It belongs to the PyrI family. Contains catalytic and regulatory chains. It depends on Zn(2+) as a cofactor.

In terms of biological role, involved in allosteric regulation of aspartate carbamoyltransferase. The polypeptide is Aspartate carbamoyltransferase regulatory chain (Methanopyrus kandleri (strain AV19 / DSM 6324 / JCM 9639 / NBRC 100938)).